A 392-amino-acid chain; its full sequence is Galactose-1-phosphate uridylyltransferase (392 aa).

Zn(2+) is bound by residues C52 and C55. UDP-alpha-D-glucose is bound by residues A61 and 77–78 (ND). H126 is a binding site for Zn(2+). N194 serves as a coordination point for UDP-alpha-D-glucose. H205 is a binding site for Zn(2+). Residue H207 is the Tele-UMP-histidine intermediate of the active site. Q209 provides a ligand contact to UDP-alpha-D-glucose. Positions 223, 323, 340, and 342 each coordinate Fe cation. UDP-alpha-D-glucose is bound by residues 355–358 (KFLV) and 360–361 (YE).

It belongs to the galactose-1-phosphate uridylyltransferase type 1 family. As to quaternary structure, homodimer. Requires Zn(2+) as cofactor.

The enzyme catalyses alpha-D-galactose 1-phosphate + UDP-alpha-D-glucose = alpha-D-glucose 1-phosphate + UDP-alpha-D-galactose. It participates in carbohydrate metabolism; galactose metabolism. The polypeptide is Galactose-1-phosphate uridylyltransferase (gal-7) (Neurospora crassa (strain ATCC 24698 / 74-OR23-1A / CBS 708.71 / DSM 1257 / FGSC 987)).